A 1444-amino-acid chain; its full sequence is Adhesin P1 (1444 aa).

The N-terminal stretch at 1–30 (MHQPKKRLAKKSWAFLTAALTLGVITGVGG) is a signal peptide. 3 disordered regions span residues 231–283 (QSSF…EVER), 845–885 (IPFE…ALPN), and 927–949 (GDSNDQFNKDSEQKWDKTETNEG). Residues 240 to 257 (LQKDSPVKDSSKQGEKLS) are compositionally biased toward basic and acidic residues. Residues 258–272 (ETTASSMSSGMATST) show a composition bias toward low complexity. Composition is skewed to polar residues over residues 851-860 (KPSNNSTPFD) and 868-878 (VTPSGGSSKPT). Residues 933-946 (FNKDSEQKWDKTET) show a composition bias toward basic and acidic residues. Residues 1353-1373 (VLPLIVTVPIVVIILSVTLGL) traverse the membrane as a helical segment. Residues 1419 to 1444 (NAPKKLKQATPTKPTPKTPPKPPVKQ) form a disordered region. Pro residues predominate over residues 1431 to 1444 (KPTPKTPPKPPVKQ).

This sequence belongs to the adhesin P1 family.

It is found in the cell membrane. The protein is the major adhesin mediating the attachment of this mycoplasma to the ciliated epithelium. This Mycoplasma genitalium (strain ATCC 33530 / DSM 19775 / NCTC 10195 / G37) (Mycoplasmoides genitalium) protein is Adhesin P1 (mgpA).